Consider the following 1023-residue polypeptide: 2-oxoglutarate dehydrogenase complex component E1 (1023 aa).

Residues 1–40 (MFHLRTCAAKLRPLTASQTVKTFSQNKPAAIRTFQQIRCY) constitute a mitochondrion transit peptide. K74 carries the N6-succinyllysine modification. Phosphoserine is present on S100. The Ca(2+) site is built by H143, D156, and D158. R312 contacts thiamine diphosphate. K401 carries the post-translational modification N6-acetyllysine. The thiamine diphosphate site is built by D411, N444, and I446. Positions 411, 444, and 446 each coordinate Mg(2+). K534 is covalently cross-linked (Glycyl lysine isopeptide (Lys-Gly) (interchain with G-Cter in ubiquitin)). Position 564 is an N6-succinyllysine (K564). Thiamine diphosphate is bound at residue Q676. The recognized by alloreactive CD8 cytotoxic T-lymphocytes in association with a class I MHC protein stretch occupies residues 933 to 939 (LSPFPFD). The residue at position 970 (K970) is an N6-acetyllysine.

The protein belongs to the alpha-ketoglutarate dehydrogenase family. Homodimer. The 2-oxoglutarate dehydrogenase complex is composed of OGDH (2-oxoglutarate dehydrogenase; E1), DLST (dihydrolipoamide succinyltransferase; E2), DLD (dihydrolipoamide dehydrogenase; E3) and the assembly factor KGD4. It contains multiple copies of the three enzymatic components (E1, E2 and E3). In the nucleus, the 2-oxoglutarate dehydrogenase complex associates with KAT2A. Interacts with ABHD11; this interaction maintains the functional lipoylation of the 2-oxoglutarate dehydrogenase complex. Thiamine diphosphate serves as cofactor. Requires Mg(2+) as cofactor.

It is found in the mitochondrion. The protein localises to the nucleus. The enzyme catalyses N(6)-[(R)-lipoyl]-L-lysyl-[protein] + 2-oxoglutarate + H(+) = N(6)-[(R)-S(8)-succinyldihydrolipoyl]-L-lysyl-[protein] + CO2. Calcium ions and ADP stimulate, whereas ATP and NADH reduce catalytic activity. Functionally, 2-oxoglutarate dehydrogenase (E1o) component of the 2-oxoglutarate dehydrogenase complex (OGDHC). Participates in the first step, rate limiting for the overall conversion of 2-oxoglutarate to succinyl-CoA and CO(2) catalyzed by the whole OGDHC. Catalyzes the irreversible decarboxylation of 2-oxoglutarate (alpha-ketoglutarate) via the thiamine diphosphate (ThDP) cofactor and subsequent transfer of the decarboxylated acyl intermediate on an oxidized dihydrolipoyl group that is covalently amidated to the E2 enzyme (dihydrolipoyllysine-residue succinyltransferase or DLST). Plays a key role in the Krebs (citric acid) cycle, which is a common pathway for oxidation of fuel molecules, including carbohydrates, fatty acids, and amino acids. Can catalyze the decarboxylation of 2-oxoadipate in vitro, but at a much lower rate than 2-oxoglutarate. Mainly active in the mitochondrion. A fraction of the 2-oxoglutarate dehydrogenase complex also localizes in the nucleus and is required for lysine succinylation of histones: associates with KAT2A on chromatin and provides succinyl-CoA to histone succinyltransferase KAT2A. The protein is 2-oxoglutarate dehydrogenase complex component E1 of Mus musculus (Mouse).